Here is a 1163-residue protein sequence, read N- to C-terminus: MGPPEKESKAILKARGLEEEQKSERKMTSPENDSKSIQKDQGPEQEQTSESTMGPPEKESKAILKARGLEEEQKSERKMTSPENDSKSIQKDQGPEQEQTSESTMGPPEKDSKAILKARGLEEEQKSESTMSPSENVSRAILKDSGSEEVEQASERKMTSPENDSKSIQKDQGPEQEQTSETLQSKEEDEVTEADKDNGGDLQDYKAHVIAKFDTSVDLHYDSPEMKLLSDAFKPYQKTFQPHTIILHGRPGVGKSALARSIVLGWAQGKLFQKMSFVIFFSVREIKWTEKSSLAQLIAKECPDSWDLVTKIMSQPERLLFVIDGLDDMDSVLQHDDMTLSRDWKDEQPIYILMYSLLRKALLPQSFLIITTRNTGLEKLKSMVVSPLYILVEGLSASRRSQLVLENISNESDRIQVFHSLIENHQLFDQCQAPSVCSLVCEALQLQKKLGKRCTLPCQTLTGLYATLVFHQLTLKRPSQSALSQEEQITLVGLCMMAAEGVWTMRSVFYDDDLKNYSLKESEILALFHMNILLQVGHNSEQCYVFSHLSLQDFFAALYYVLEGLEEWNQHFCFIENQRSIMEVKRTDDTRLLGMKRFLFGLMNKDILKTLEVLFEYPVIPTVEQKLQHWVSLIAQQVNGTSPMDTLDAFYCLFESQDEEFVGGALKRFQEVWLLINQKMDLKVSSYCLKHCQNLKAIRVDIRDLLSVDNTLELCPVVTVQETQCKPLLMEWWGNFCSVLGSLRNLKELDLGDSILSQRAMKILCLELRNQSCRIQKLTFKSAEVVSGLKHLWKLLFSNQNLKYLNLGNTPMKDDDMKLACEALKHPKCSVETLRLDSCELTIIGYEMISTLLISTTRLKCLSLAKNRVGVKSMISLGNALSSSMCLLQKLILDNCGLTPASCHLLVSALFSNQNLTHLCLSNNSLGTEGVQQLCQFLRNPECALQRLILNHCNIVDDAYGFLAMRLANNTKLTHLSLTMNPVGDGAMKLLCEALKEPTCYLQELELVDCQLTQNCCEDLACMITTTKHLKSLDLGNNALGDKGVITLCEGLKQSSSSLRRLGLGACKLTSNCCEALSLAISCNPHLNSLNLVKNDFSTSGMLKLCSAFQCPVSNLGIIGLWKQEYYARVRRQLEEVEFVKPHVVIDGDWYASDEDDRNWWKN.

Composition is skewed to basic and acidic residues over residues 1–42 (MGPP…KDQG), 56–94 (PEKE…KDQG), and 108–127 (PEKD…EQKS). A disordered region spans residues 1 to 201 (MGPPEKESKA…TEADKDNGGD (201 aa)). Over residues 128–137 (ESTMSPSENV) the composition is skewed to polar residues. Over residues 153-173 (ASERKMTSPENDSKSIQKDQG) the composition is skewed to basic and acidic residues. Residues 243-565 (HTIILHGRPG…AALYYVLEGL (323 aa)) form the NACHT domain. Residue 249 to 256 (GRPGVGKS) coordinates ATP. 11 LRR repeats span residues 801–822 (NLKY…LACE), 830–851 (SVET…MIST), 858–878 (RLKC…ISLG), 887–906 (LLQK…CHLL), 915–935 (NLTH…QQLC), 944–964 (ALQR…GFLA), 972–993 (KLTH…LLCE), 1001–1022 (YLQE…DLAC), 1029–1050 (HLKS…TLCE), 1058–1079 (SLRR…ALSL), and 1086–1107 (HLNS…KLCS).

It belongs to the NLRP family. In terms of assembly, component of the subcortical maternal complex (SCMC), at least composed of NLRP5, KHDC3, OOEP, and TLE6. Within the complex, interacts with OOEP, KHDC3 and TLE6. The SCMC may facilitate translocation of its components between the nuclear and cytoplasmic compartments. As part of the SCMC interacts with the SCMC-associated protein ZBED3. As part of the SCMC interacts with the SCMC-associated protein CFL1/Cofilin-1. Interacts with PRKCE. Interacts with TUBB3 at cytoskeleton microtubules. In terms of processing, phosphorylated by PRKCE.

The protein resides in the cytoplasm. Its subcellular location is the cytoplasmic vesicle. It is found in the secretory vesicle. The protein localises to the cortical granule. It localises to the mitochondrion. The protein resides in the nucleus. Its subcellular location is the nucleolus. It is found in the golgi apparatus. Its function is as follows. Component of the subcortical maternal complex (SCMC), a multiprotein complex that plays a key role in early embryonic development. The SCMC complex is a structural constituent of cytoplasmic lattices, which consist in fibrous structures found in the cytoplasm of oocytes and preimplantation embryos. They are required to store maternal proteins critical for embryonic development, such as proteins that control epigenetic reprogramming of the preimplantation embryo, and prevent their degradation or activation. Required for the localization of cortical granules to the cortex of oocytes, via association with the cortical actin scaffold. Required for cortical actin clearance prior to oocyte exocytosis and prevention of polyspermy. Involved in regulating post-fertilization Ca(2+) release and endoplasmic reticulum storage (ER) storage via regulation of cellular localization. May be involved in the localization of mitochondria to the cytoplasm and perinuclear region in oocytes and early stage embryos, independent of its role in CPL formation. The chain is NACHT, LRR and PYD domains-containing protein 5 from Mus musculus (Mouse).